A 317-amino-acid polypeptide reads, in one-letter code: Thymidylate synthase (317 aa).

Residues arginine 40 and arginine 167 to arginine 168 contribute to the dUMP site. Catalysis depends on cysteine 187, which acts as the Nucleophile. Residues arginine 216–aspartate 219, asparagine 227, and histidine 257–tyrosine 259 each bind dUMP. A (6R)-5,10-methylene-5,6,7,8-tetrahydrofolate-binding site is contributed by aspartate 219.

This sequence belongs to the thymidylate synthase family. Homodimer.

The catalysed reaction is dUMP + (6R)-5,10-methylene-5,6,7,8-tetrahydrofolate = 7,8-dihydrofolate + dTMP. It participates in pyrimidine metabolism; dTTP biosynthesis. The polypeptide is Thymidylate synthase (TMP1) (Cryptococcus neoformans var. neoformans serotype D (strain B-3501A) (Filobasidiella neoformans)).